Here is a 1039-residue protein sequence, read N- to C-terminus: FERM domain-containing protein 4A (1039 aa).

The FERM domain maps to 20–322; the sequence is RRCQVHLLDD…SQHQFYLDRK (303 aa). Positions 358-420 are necessary for interaction with CYTH1; the sequence is KGKIISGSSG…KLCLREAELT (63 aa). Residues 366 to 382 are compositionally biased toward low complexity; the sequence is SGSLLSSGSQESDSSQS. The tract at residues 366–386 is disordered; sequence SGSLLSSGSQESDSSQSAKKD. A coiled-coil region spans residues 382–416; the sequence is SAKKDMLAALKSRQEALEETLRQRLEELKKLCLRE. A Phosphoserine modification is found at serine 530. Positions 553 to 680 are disordered; the sequence is DEDSQVTSTI…MPSTPDLRVR (128 aa). Residues 571 to 586 show a composition bias toward pro residues; sequence GLPPRPPSHNRPPPPQ. The necessary for tight junction and adherens junction localization; Requires for interaction with PARD3 stretch occupies residues 579-939; the sequence is HNRPPPPQSL…QWYQRSTASH (361 aa). Phosphoserine is present on residues serine 604 and serine 615. Positions 623-638 are enriched in basic residues; it reads VKKRSSHSHSSSHKRF. 2 positions are modified to phosphoserine: serine 681 and serine 711. Disordered regions lie at residues 713–756 and 772–813; these read ESQG…HSSS and AEDS…AGGA. Residues 788–800 show a composition bias toward low complexity; it reads RAAGALGSASSGS. Serine 800, serine 872, and serine 901 each carry phosphoserine. 2 disordered regions span residues 879 to 968 and 980 to 1039; these read FKES…STFV and CKAT…STDE. The segment covering 896-905 has biased composition (polar residues); sequence LTPSRSQILR. Over residues 912 to 929 the composition is skewed to basic and acidic residues; the sequence is EGAHDKGAGRAAVSDELR. The span at 946–966 shows a compositional bias: low complexity; the sequence is SHTSSTSSDSGSQYSTSSQST. 2 stretches are compositionally biased toward polar residues: residues 986 to 1000 and 1013 to 1023; these read ALPQSQRSSTPSSEI and TWQTGEATENS.

In terms of assembly, interacts (via coiled-coil domain) with CYTH1 (via coiled-coil domain). Interacts with PARD3 (via coiled-coil domain). Found in a complex with PARD3, CYTH1 and FRMD4A. Interacts with CYTH2. Interacts with CYTH3.

It localises to the cytoplasm. Its subcellular location is the cytoskeleton. The protein localises to the cell junction. It is found in the adherens junction. The protein resides in the tight junction. Its function is as follows. Scaffolding protein that regulates epithelial cell polarity by connecting ARF6 activation with the PAR3 complex. Plays a redundant role with FRMD4B in epithelial polarization. May regulate MAPT secretion by activating ARF6-signaling. In Homo sapiens (Human), this protein is FERM domain-containing protein 4A.